The following is an 81-amino-acid chain: Large ribosomal subunit protein bL27 (81 aa).

The span at 1-11 (MATSKSGGSSK) shows a compositional bias: polar residues. Residues 1-24 (MATSKSGGSSKNGRDSISKRLGVK) form a disordered region.

The protein belongs to the bacterial ribosomal protein bL27 family.

This is Large ribosomal subunit protein bL27 from Borrelia duttonii (strain Ly).